Consider the following 490-residue polypeptide: Ribulose bisphosphate carboxylase large chain (490 aa).

Substrate contacts are provided by Asn-127 and Thr-177. Residue Lys-179 is the Proton acceptor of the active site. Lys-181 lines the substrate pocket. The Mg(2+) site is built by Lys-205, Asp-207, and Glu-208. Lys-205 is modified (N6-carboxylysine). His-297 serves as the catalytic Proton acceptor. Residues Arg-298, His-330, and Ser-382 each contribute to the substrate site.

This sequence belongs to the RuBisCO large chain family. Type I subfamily. In terms of assembly, heterohexadecamer of 8 large chains and 8 small chains. Requires Mg(2+) as cofactor.

The protein localises to the plastid. The protein resides in the chloroplast. The enzyme catalyses 2 (2R)-3-phosphoglycerate + 2 H(+) = D-ribulose 1,5-bisphosphate + CO2 + H2O. It carries out the reaction D-ribulose 1,5-bisphosphate + O2 = 2-phosphoglycolate + (2R)-3-phosphoglycerate + 2 H(+). Its function is as follows. RuBisCO catalyzes two reactions: the carboxylation of D-ribulose 1,5-bisphosphate, the primary event in carbon dioxide fixation, as well as the oxidative fragmentation of the pentose substrate in the photorespiration process. Both reactions occur simultaneously and in competition at the same active site. The protein is Ribulose bisphosphate carboxylase large chain of Thalassiosira nordenskioeldii (Marine diatom).